Reading from the N-terminus, the 455-residue chain is Ribulose bisphosphate carboxylase large chain (455 aa).

Lys-5 is modified (N6,N6,N6-trimethyllysine). Asn-114 and Thr-164 together coordinate substrate. The Proton acceptor role is filled by Lys-166. Lys-168 is a substrate binding site. Lys-192, Asp-194, and Glu-195 together coordinate Mg(2+). Residue Lys-192 is modified to N6-carboxylysine. Residue His-285 is the Proton acceptor of the active site. Substrate is bound by residues Arg-286, His-318, and Ser-370.

The protein belongs to the RuBisCO large chain family. Type I subfamily. Heterohexadecamer of 8 large chains and 8 small chains. It depends on Mg(2+) as a cofactor.

It is found in the plastid. The protein resides in the chloroplast. It carries out the reaction 2 (2R)-3-phosphoglycerate + 2 H(+) = D-ribulose 1,5-bisphosphate + CO2 + H2O. The enzyme catalyses D-ribulose 1,5-bisphosphate + O2 = 2-phosphoglycolate + (2R)-3-phosphoglycerate + 2 H(+). In terms of biological role, ruBisCO catalyzes two reactions: the carboxylation of D-ribulose 1,5-bisphosphate, the primary event in carbon dioxide fixation, as well as the oxidative fragmentation of the pentose substrate in the photorespiration process. Both reactions occur simultaneously and in competition at the same active site. This is Ribulose bisphosphate carboxylase large chain from Tamarindus indica (Tamarind).